The following is a 1096-amino-acid chain: MTEHHMDVQADATQSASESKAMAAPKGKFSEAEEGFLSTSPDSANGDAQQAHTHTHIISHTHSKGAAKTQTQTQNGNGTLGMGLGAPMLPGGSRQLLRQAFYQCSCPEQCVTLNNILDSFKAPLSEDQAWALIYQFGSLYYKVAAQAHKSGGDYEADLPSRFELHFHRDGNVHFSGAERLPELVESQEQEASQQEQQQKQPQMDDSATSSVDSNAALDRAFDNNNHEHHHHHHHQHHHPVDSNAALDRAHHTPLVVSHRKIISEMAEIVYTALDYNLPEDEECQMSQELENLFNFMTADETDEDCIDEGIDEGDKRWDDEAEEERNDTKELEHIIETCRNHLQKPALADNHYKAVCRALATETIELRVFLQQVLNNGAEKLIKAAESSPTTQKELAKLGFNDWARFWVQVIDELRRGVRLKKSNFERTPIEYELTPYEILMGDIRAKKYQLRKVMVNGDIPPRVKKDAHAMILEFIRSRPPLKKASERQLGPPRMCTPTPREQLMESIRQGKELKQITPPEAPPLRQRMLPSANSTLSRSRQRLIKVDFSQLQDDELFFDDSSMSSSHSTAATHQHHQQHQPHHAHLAELHRCSQPKMPPYPFGGYMVPSQARQECQATATQLRPRRTMDTSAPRQTLPQPQAQARPPPPAEPSFTEDEYHRFFDNALESYDLATQCESRRASLRRHTIVGCQSNLEETHSMPPTRPESRQSDDAGSQSQSGASSEAPGIRKSPLMEGDHSQTTDGPPRLDEAHSTSSLGPWNKSFMDKQTWMERGDDRLSVTLAEIVHIRSVMTKAELEGLPMDVRVKEDVEKRRVCFLCLRTRFSFFGPWGIQCKLCQRTVCAKCYTKMRIPSEHFRNVPLVLISPSLLSSPASSSTPSPSHHAHQAHSSSTGNIMDDQFPKSLIERLLRSESDRKTRSTVGSAPSSPKHQRSNMSTPGISVGPGAGASTSAAPGHAVEALHDQAAMSASYSSAMRPSGVMQHHQKHHYNNAMSRSMEGPRSLPVHSPAYRPLSNSSTLERKSRFSRGFALFSSGSHLAQTQDQKENLRGEQVPVCNDCQGLVNEITSSVKQKRSSARNRTIQNLTLDLTPVWK.

2 disordered regions span residues 1 to 79 (MTEH…GNGT) and 184 to 211 (VESQEQEASQQEQQQKQPQMDDSATSSV). Over residues 37 to 51 (LSTSPDSANGDAQQA) the composition is skewed to polar residues. Positions 53-65 (THTHIISHTHSKG) are enriched in basic residues. Low complexity-rich tracts occupy residues 66–77 (AAKTQTQTQNGN) and 189–201 (QEASQQEQQQKQP). The 256-residue stretch at 111–366 (VTLNNILDSF…RALATETIEL (256 aa)) folds into the KIND domain. The stretch at 315 to 340 (KRWDDEAEEERNDTKELEHIIETCRN) forms a coiled coil. WH2 domains lie at 436-454 (PYEILMGDIRAKKYQLRKV) and 500-517 (PREQLMESIRQGKELKQI). Disordered regions lie at residues 560–588 (DDSSMSSSHSTAATHQHHQQHQPHHAHLA), 614–656 (QECQ…PSFT), and 693–762 (QSNL…LGPW). Residues 574-585 (HQHHQQHQPHHA) show a composition bias toward basic residues. Low complexity-rich tracts occupy residues 633–645 (APRQTLPQPQAQA) and 714–725 (DAGSQSQSGASS). Over residues 737–754 (EGDHSQTTDGPPRLDEAH) the composition is skewed to basic and acidic residues. A spir-box region spans residues 780-800 (LSVTLAEIVHIRSVMTKAELE). A compositionally biased stretch (low complexity) spans 874–894 (PASSSTPSPSHHAHQAHSSST). Disordered stretches follow at residues 874–899 (PASSSTPSPSHHAHQAHSSSTGNIMD), 912–958 (RSES…APGH), and 997–1021 (RSMEGPRSLPVHSPAYRPLSNSSTL). The segment covering 921–941 (STVGSAPSSPKHQRSNMSTPG) has biased composition (polar residues).

This sequence belongs to the spire family. As to quaternary structure, interacts with bsk, Rho1, Rac1, Cdc42 and wash. Interacts with capu. Phosphorylated by Jnk kinase (bsk).

It is found in the cytoplasm. The protein resides in the cytoskeleton. It localises to the perinuclear region. Its subcellular location is the cell membrane. The protein localises to the cytoplasmic vesicle membrane. In terms of biological role, acts as an actin nucleation factor, remains associated with the slow-growing pointed end of the new filament. Promotes dissociation of capu from the barbed end of actin filaments. Involved in intracellular vesicle transport along actin fibers, providing a novel link between actin cytoskeleton dynamics and intracellular transport. Required for localization of determinants within the developing oocyte to the posterior pole and to the dorsal anterior corner. Links Rho family signaling and Jnk function to the actin cytoskeleton. This Drosophila pseudoobscura pseudoobscura (Fruit fly) protein is Protein spire.